The primary structure comprises 208 residues: Coat protein (208 aa).

This sequence belongs to the potexvirus capsid protein family.

The protein localises to the virion. In terms of biological role, required for genome encapsidation. Forms ribonucleoprotein complexes along with TGB1 helicase and viral RNA. The polypeptide is Coat protein (Trifolium (WCMV)).